The following is a 296-amino-acid chain: Regulatory protein PchR (296 aa).

One can recognise an HTH araC/xylS-type domain in the interval 201–296 (HAARDLLVGA…RYGISPSEIR (96 aa)). 2 DNA-binding regions (H-T-H motif) span residues 218–239 (DTLA…RKVF) and 266–288 (VSTV…RKRY).

Functionally, positive activator of the genes for pyochelin and ferripyochelin receptors. The protein is Regulatory protein PchR (pchR) of Pseudomonas aeruginosa (strain ATCC 15692 / DSM 22644 / CIP 104116 / JCM 14847 / LMG 12228 / 1C / PRS 101 / PAO1).